The following is a 20-amino-acid chain: Unknown protein NF028 from 2D-PAGE (20 aa).

The chain is Unknown protein NF028 from 2D-PAGE from Naegleria fowleri (Brain eating amoeba).